Here is an 81-residue protein sequence, read N- to C-terminus: Photosystem I iron-sulfur center (81 aa).

2 4Fe-4S ferredoxin-type domains span residues 2–31 (AHSV…MIPW) and 39–68 (IASA…VRVY). Cysteine 11, cysteine 14, cysteine 17, cysteine 21, cysteine 48, cysteine 51, cysteine 54, and cysteine 58 together coordinate [4Fe-4S] cluster.

In terms of assembly, the eukaryotic PSI reaction center is composed of at least 11 subunits. The cofactor is [4Fe-4S] cluster.

The protein localises to the plastid. Its subcellular location is the chloroplast thylakoid membrane. The catalysed reaction is reduced [plastocyanin] + hnu + oxidized [2Fe-2S]-[ferredoxin] = oxidized [plastocyanin] + reduced [2Fe-2S]-[ferredoxin]. Apoprotein for the two 4Fe-4S centers FA and FB of photosystem I (PSI); essential for photochemical activity. FB is the terminal electron acceptor of PSI, donating electrons to ferredoxin. The C-terminus interacts with PsaA/B/D and helps assemble the protein into the PSI complex. Required for binding of PsaD and PsaE to PSI. PSI is a plastocyanin-ferredoxin oxidoreductase, converting photonic excitation into a charge separation, which transfers an electron from the donor P700 chlorophyll pair to the spectroscopically characterized acceptors A0, A1, FX, FA and FB in turn. This chain is Photosystem I iron-sulfur center, found in Cycas taitungensis (Prince sago).